Reading from the N-terminus, the 536-residue chain is Proto-oncogene tyrosine-protein kinase Src (536 aa).

The tract at residues 1–53 (MGSNKSKPKDASQRRRSLEPAENVHGAGGGAFPASQTPSKPASADGHRGPSAA) is disordered. A lipid anchor (N-myristoyl glycine) is attached at Gly-2. Positions 7–19 (KPKDASQRRRSLE) are enriched in basic and acidic residues. Ser-17 is subject to Phosphoserine. Position 75 is a phosphoserine; by CDK5 (Ser-75). In terms of domain architecture, SH3 spans 84 to 145 (GGVTTFVALY…PSNYVAPSDS (62 aa)). An SH2 domain is found at 151–248 (WYFGKITRRE…GLCHRLTTVC (98 aa)). Tyr-187 is modified (phosphotyrosine). The Protein kinase domain occupies 270–523 (LRLEVKLGQG…YLQAFLEDYF (254 aa)). Residues 276–284 (LGQGCFGEV) and Lys-298 contribute to the ATP site. The active-site Proton acceptor is Asp-389. The residue at position 419 (Tyr-419) is a Phosphotyrosine; by autocatalysis. Tyr-419 bears the Phosphotyrosine; by FAK2 mark. At Tyr-530 the chain carries Phosphotyrosine; by CSK.

It belongs to the protein kinase superfamily. Tyr protein kinase family. SRC subfamily. Part of a complex comprised of PTPRA, BCAR1, BCAR3 (via SH2 domain) and SRC; the formation of the complex is dependent on integrin mediated-tyrosine phosphorylation of PTPRA. Interacts with DDEF1/ASAP1; via the SH3 domain. Interacts with CCPG1. Identified in a complex containing FGFR4, NCAM1, CDH2, PLCG1, FRS2, SRC, SHC1, GAP43 and CTTN. Interacts with ERBB2, STAT1 and PNN. Interacts with DDR1, DDR2 and DAB2. Interacts with CDCP1, TGFB1I1 and TOM1L2. Interacts with the cytoplasmic domain of MUC1, phosphorylates it and increases binding of MUC1 with beta-catenin. Interacts with RALGPS1; via the SH3 domain. Interacts with CAV2 (tyrosine phosphorylated form). Interacts (via the SH3 domain and the protein kinase domain) with ARRB1; the interaction is independent of the phosphorylation state of SRC C-terminus. Interacts with ARRB1 and ARRB2. Interacts with SRCIN1. Interacts with NDFIP2 and more weakly with NDFIP1. Interacts with PIK3CA and/or PIK3C2B, PTK2/FAK1 and ESR1 (dimethylated on arginine). Interacts with FASLG. Interacts (via SH2 domain) with the 'Tyr-402' phosphorylated form of PTK2B/PYK2. Interacts (via SH2 domain) with FLT3 (tyrosine phosphorylated). Interacts with PDGFRA (tyrosine phosphorylated). Interacts with CSF1R. Interacts (via SH2 and SH3 domain) with TNK2. Interacts (via protein kinase domain) with the tyrosine phosphorylated form of RUNX3 (via runt domain). Interacts with TRAF3 (via RING-type zinc finger domain). Interacts with RIGI, MAVS and TBK1. Interacts (via SH2 domain) with RACK1; the interaction is enhanced by tyrosine phosphorylation of RACK1 and inhibits SRC activity. Interacts with EPHB1; activates the MAPK/ERK cascade to regulate cell migration. Interacts with FCAMR. Interacts (via SH2 domain) with the 'Tyr-9' phosphorylated form of PDPK1. Interacts with AMOTL2; this interaction regulates the translocation of phosphorylated SRC to peripheral cell-matrix adhesion sites. Interacts with TRAP1. Interacts with CBLC; the interaction is enhanced when SRC is phosphorylated at Tyr-419. Interacts with ARHGEF5. Interacts (via cytoplasmic domain) with CEACAM1 (via SH2 domain); this interaction is regulated by trans-homophilic cell adhesion. Interacts with MPP2. Interacts with PRR7. Interacts (via kinase domain and to a lesser extent the SH2 domain) directly with PDLIM4; this interaction results in PTPN13-mediated dephosphorylation of this protein leading to its inactivation. Interacts with P85 (PIK3R1 or PIK3R2). Interacts with HNRNPA2B1. Interacts with IL6ST/gp130. Interacts (via SH3 domain) with PELP1 in the presence of 17-beta-estradiol. Interacts with AMBRA1. As to quaternary structure, (Microbial infection) Interacts with HEV ORF3 protein; via the SH3 domain. In terms of assembly, (Microbial infection) Interacts (via SH2 domain) with HCV non-structural protein 5A (via N-terminus). Myristoylated at Gly-2, and this is essential for targeting to membranes. In terms of processing, dephosphorylated at Tyr-530 by PTPRJ. Phosphorylated on Tyr-530 by c-Src kinase (CSK). The phosphorylated form is termed pp60c-src. Dephosphorylated by PTPRJ at Tyr-419. Normally maintained in an inactive conformation with the SH2 domain engaged with Tyr-530, the SH3 domain engaged with the SH2-kinase linker, and Tyr-419 dephosphorylated. Dephosphorylation of Tyr-530 as a result of protein tyrosine phosphatase (PTP) action disrupts the intramolecular interaction between the SH2 domain and Tyr-530, Tyr-419 can then become autophosphorylated, resulting in SRC activation. Phosphorylation of Tyr-530 by CSK allows this interaction to reform, resulting in SRC inactivation. CDK5-mediated phosphorylation at Ser-75 targets SRC to ubiquitin-dependent degradation and thus leads to cytoskeletal reorganization. Phosphorylated by PTK2/FAK1; this enhances kinase activity. Phosphorylated by PTK2B/PYK2; this enhances kinase activity. Upon activation of IL6ST by IL6, Tyr-419 is phosphorylated and Tyr-530 dephosphorylated. Post-translationally, displays reduced levels of autophosphorylation at Tyr-419 compared to isoforms 2 and 3. Displays enhanced levels of autophosphorylation at Tyr-419 compared to isoform 1. In terms of processing, displays enhanced levels of autophosphorylation at Tyr-419 compared to isoform 1. Shows reduced phosphorylation at Tyr-527 compared to isoforms 1 and 2. Post-translationally, S-nitrosylation is important for activation of its kinase activity. Ubiquitinated in response to CDK5-mediated phosphorylation. Ubiquitination mediated by CBLC requires SRC autophosphorylation at Tyr-419 and may lead to lysosomal degradation. Expressed ubiquitously. Expressed in the skin (at protein level). Platelets, neurons and osteoclasts express 5-fold to 200-fold higher levels than most other tissues. In terms of tissue distribution, expressed in spleen and liver. As to expression, expressed in brain.

The protein localises to the cell membrane. The protein resides in the mitochondrion inner membrane. It is found in the nucleus. Its subcellular location is the cytoplasm. It localises to the cytoskeleton. The protein localises to the perinuclear region. The protein resides in the cell junction. It is found in the focal adhesion. The catalysed reaction is L-tyrosyl-[protein] + ATP = O-phospho-L-tyrosyl-[protein] + ADP + H(+). Its activity is regulated as follows. Phosphorylation by CSK at Tyr-530 inhibits kinase activity. Inhibitory phosphorylation at Tyr-530 is enhanced by heme. Further phosphorylation by CDK1 partially reactivates CSK-inactivated SRC and facilitates complete reactivation by protein tyrosine phosphatase PTPRC. Integrin engagement stimulates kinase activity. Phosphorylation by PTK2/FAK1 enhances kinase activity. Butein and pseudosubstrate-based peptide inhibitors like CIYKYYF act as inhibitors. Phosphorylation at Tyr-419 increases kinase activity. In terms of biological role, non-receptor protein tyrosine kinase which is activated following engagement of many different classes of cellular receptors including immune response receptors, integrins and other adhesion receptors, receptor protein tyrosine kinases, G protein-coupled receptors as well as cytokine receptors. Participates in signaling pathways that control a diverse spectrum of biological activities including gene transcription, immune response, cell adhesion, cell cycle progression, apoptosis, migration, and transformation. Due to functional redundancy between members of the SRC kinase family, identification of the specific role of each SRC kinase is very difficult. SRC appears to be one of the primary kinases activated following engagement of receptors and plays a role in the activation of other protein tyrosine kinase (PTK) families. Receptor clustering or dimerization leads to recruitment of SRC to the receptor complexes where it phosphorylates the tyrosine residues within the receptor cytoplasmic domains. Plays an important role in the regulation of cytoskeletal organization through phosphorylation of specific substrates such as AFAP1. Phosphorylation of AFAP1 allows the SRC SH2 domain to bind AFAP1 and to localize to actin filaments. Cytoskeletal reorganization is also controlled through the phosphorylation of cortactin (CTTN). When cells adhere via focal adhesions to the extracellular matrix, signals are transmitted by integrins into the cell resulting in tyrosine phosphorylation of a number of focal adhesion proteins, including PTK2/FAK1 and paxillin (PXN). In addition to phosphorylating focal adhesion proteins, SRC is also active at the sites of cell-cell contact adherens junctions and phosphorylates substrates such as beta-catenin (CTNNB1), delta-catenin (CTNND1), and plakoglobin (JUP). Another type of cell-cell junction, the gap junction, is also a target for SRC, which phosphorylates connexin-43 (GJA1). SRC is implicated in regulation of pre-mRNA-processing and phosphorylates RNA-binding proteins such as KHDRBS1. Phosphorylates PKP3 at 'Tyr-195' in response to reactive oxygen species, which may cause the release of PKP3 from desmosome cell junctions into the cytoplasm. Also plays a role in PDGF-mediated tyrosine phosphorylation of both STAT1 and STAT3, leading to increased DNA binding activity of these transcription factors. Involved in the RAS pathway through phosphorylation of RASA1 and RASGRF1. Plays a role in EGF-mediated calcium-activated chloride channel activation. Required for epidermal growth factor receptor (EGFR) internalization through phosphorylation of clathrin heavy chain (CLTC and CLTCL1) at 'Tyr-1477'. Involved in beta-arrestin (ARRB1 and ARRB2) desensitization through phosphorylation and activation of GRK2, leading to beta-arrestin phosphorylation and internalization. Has a critical role in the stimulation of the CDK20/MAPK3 mitogen-activated protein kinase cascade by epidermal growth factor. Might be involved not only in mediating the transduction of mitogenic signals at the level of the plasma membrane but also in controlling progression through the cell cycle via interaction with regulatory proteins in the nucleus. Plays an important role in osteoclastic bone resorption in conjunction with PTK2B/PYK2. Both the formation of a SRC-PTK2B/PYK2 complex and SRC kinase activity are necessary for this function. Recruited to activated integrins by PTK2B/PYK2, thereby phosphorylating CBL, which in turn induces the activation and recruitment of phosphatidylinositol 3-kinase to the cell membrane in a signaling pathway that is critical for osteoclast function. Promotes energy production in osteoclasts by activating mitochondrial cytochrome C oxidase. Phosphorylates DDR2 on tyrosine residues, thereby promoting its subsequent autophosphorylation. Phosphorylates RUNX3 and COX2 on tyrosine residues, TNK2 on 'Tyr-284' and CBL on 'Tyr-731'. Enhances RIGI-elicited antiviral signaling. Phosphorylates PDPK1 at 'Tyr-9', 'Tyr-373' and 'Tyr-376'. Phosphorylates BCAR1 at 'Tyr-128'. Phosphorylates CBLC at multiple tyrosine residues, phosphorylation at 'Tyr-341' activates CBLC E3 activity. Phosphorylates synaptic vesicle protein synaptophysin (SYP). Involved in anchorage-independent cell growth. Required for podosome formation. Mediates IL6 signaling by activating YAP1-NOTCH pathway to induce inflammation-induced epithelial regeneration. Phosphorylates OTUB1, promoting deubiquitination of RPTOR. Phosphorylates caspase CASP8 at 'Tyr-380' which negatively regulates CASP8 processing and activation, down-regulating CASP8 proapoptotic function. Functionally, non-receptor protein tyrosine kinase which phosphorylates synaptophysin with high affinity. Non-receptor protein tyrosine kinase which shows higher basal kinase activity than isoform 1, possibly due to weakened intramolecular interactions which enhance autophosphorylation of Tyr-419 and subsequent activation. The SH3 domain shows reduced affinity with the linker sequence between the SH2 and kinase domains which may account for the increased basal activity. Displays altered substrate specificity compared to isoform 1, showing weak affinity for synaptophysin and for peptide substrates containing class I or class II SH3 domain-binding motifs. Plays a role in L1CAM-mediated neurite elongation, possibly by acting downstream of L1CAM to drive cytoskeletal rearrangements involved in neurite outgrowth. Its function is as follows. Non-receptor protein tyrosine kinase which shows higher basal kinase activity than isoform 1, possibly due to weakened intramolecular interactions which enhance autophosphorylation of Tyr-419 and subsequent activation. The SH3 domain shows reduced affinity with the linker sequence between the SH2 and kinase domains which may account for the increased basal activity. Displays altered substrate specificity compared to isoform 1, showing weak affinity for synaptophysin and for peptide substrates containing class I or class II SH3 domain-binding motifs. Plays a role in neurite elongation. The protein is Proto-oncogene tyrosine-protein kinase Src of Homo sapiens (Human).